Reading from the N-terminus, the 405-residue chain is MQEKDASSQGFLPHFQHFATQAIHVGQEPEQWTSRAVVPLISLSTTFKQAAPGQHSGFEYSRSGNPTRNCLEKAVAALDGAKYCLAFASGLAATVTITHLLKAGDQIICMDDVYGGTNRYFRQVASEFGLKISFVDCSKIKLLEAAITPETKLVWIETPTNPVLKMIDIEACAHIVHKRGDIILVVDNTFMSPYFQRPLALGADICMCSATKYMNGHSDVVMGLVSVNCERLHNRLRFLQNSLGAVPSPLDCYLCNRGLKTLHVRMEKHFKNGMAVAQFLESNPGVEKVIYPGLPSHPQHELAKRQCTGCTGMITFYIKGTLQHAEIFLKNLKLFTLAESLGGFESLVELPAIMTHASVPKNDRDVLGISDTLIRLSVGLEDEKDLLEDLDQALKAAHPPSGSHD.

Positions 62, 114, and 119 each coordinate substrate. At K212 the chain carries N6-(pyridoxal phosphate)lysine. E339 serves as a coordination point for substrate.

This sequence belongs to the trans-sulfuration enzymes family. In terms of assembly, homotetramer. Interacts with CALM in a calcium-dependent manner. It depends on pyridoxal 5'-phosphate as a cofactor.

The protein localises to the cytoplasm. The catalysed reaction is L,L-cystathionine + H2O = 2-oxobutanoate + L-cysteine + NH4(+). It catalyses the reaction L-cysteine + H2O = hydrogen sulfide + pyruvate + NH4(+) + H(+). The enzyme catalyses L-homocysteine + H2O = 2-oxobutanoate + hydrogen sulfide + NH4(+) + H(+). It carries out the reaction L-homoserine = 2-oxobutanoate + NH4(+). The catalysed reaction is L-selenocystathionine + H2O = L-selenocysteine + 2-oxobutanoate + NH4(+). The protein operates within amino-acid biosynthesis; L-cysteine biosynthesis; L-cysteine from L-homocysteine and L-serine: step 2/2. Catalyzes the last step in the trans-sulfuration pathway from L-methionine to L-cysteine in a pyridoxal-5'-phosphate (PLP)-dependent manner, which consists on cleaving the L,L-cystathionine molecule into L-cysteine, ammonia and 2-oxobutanoate. Part of the L-cysteine derived from the trans-sulfuration pathway is utilized for biosynthesis of the ubiquitous antioxidant glutathione. Besides its role in the conversion of L-cystathionine into L-cysteine, it utilizes L-cysteine and L-homocysteine as substrates (at much lower rates than L,L-cystathionine) to produce hydrogen sulfide (H2S). In vitro, it converts two L-cysteine molecules into lanthionine and H2S, and two L-homocysteine molecules to homolanthionine and H2S, which can be particularly relevant under conditions of severe hyperhomocysteinemia. Lanthionine and homolanthionine are structural homologs of L,L-cystathionine that differ by the absence or presence of an extra methylene group, respectively. Acts as a cysteine-protein sulfhydrase by mediating sulfhydration of target proteins: sulfhydration consists of converting -SH groups into -SSH on specific cysteine residues of target proteins such as GAPDH, PTPN1 and NF-kappa-B subunit RELA, thereby regulating their function. By generating the gasotransmitter H2S, it participates in a number of physiological processes such as vasodilation, bone protection, and inflammation. Plays an essential role in myogenesis by contributing to the biogenesis of H2S in skeletal muscle tissue. Can also accept homoserine as substrate. Catalyzes the elimination of selenocystathionine (which can be derived from the diet) to yield selenocysteine, ammonia and 2-oxobutanoate. The polypeptide is Cystathionine gamma-lyase (CTH) (Macaca fascicularis (Crab-eating macaque)).